Consider the following 181-residue polypeptide: Regulator of G-protein signaling 5 (181 aa).

The region spanning 64–180 (SLDKLLQNSY…VRSEFYKELI (117 aa)) is the RGS domain.

In terms of tissue distribution, expressed in heart and muscle.

It localises to the cytoplasm. The protein localises to the membrane. Functionally, inhibits signal transduction by increasing the GTPase activity of G protein alpha subunits thereby driving them into their inactive GDP-bound form. Binds to G(i)-alpha and G(o)-alpha, but not to G(s)-alpha. The sequence is that of Regulator of G-protein signaling 5 (Rgs5) from Mus musculus (Mouse).